We begin with the raw amino-acid sequence, 86 residues long: Mitochondrial import inner membrane translocase subunit Tim10 (86 aa).

The Twin CX3C motif motif lies at 29-54 (CQAKCIATAFRESELTKGEAVCLDRC). 2 disulfides stabilise this stretch: cysteine 29–cysteine 54 and cysteine 33–cysteine 50.

The protein belongs to the small Tim family. In terms of assembly, heterohexamer; composed of 3 copies of tim-9/tin-9.1 and 3 copies of tim-10/tin-10, named soluble 70 kDa complex. The complex associates with the tim-22 component of the TIM22 complex. Interacts with multi-pass transmembrane proteins in transit.

The protein localises to the mitochondrion inner membrane. In terms of biological role, mitochondrial intermembrane chaperone that participates in the import and insertion of multi-pass transmembrane proteins into the mitochondrial inner membrane. May also be required for the transfer of beta-barrel precursors from the TOM complex to the sorting and assembly machinery (SAM complex) of the outer membrane. Acts as a chaperone-like protein that protects the hydrophobic precursors from aggregation and guide them through the mitochondrial intermembrane space. The protein is Mitochondrial import inner membrane translocase subunit Tim10 (tin-10) of Caenorhabditis elegans.